A 600-amino-acid chain; its full sequence is Nisin transport ATP-binding protein NisT (600 aa).

The next 5 membrane-spanning stretches (helical) occupy residues 34–54, 69–89, 147–167, 168–188, and 260–280; these read AIYLIVLNAITAFVPLASLFI, LINIIIIYFIVQVITTVLGQL, AIIVELSSFISLLSSLFFIGT, WNIGVAILLLIVPVLSLVLFL, and IFLDFILNLINILTIFAMILS. Residues 34–317 enclose the ABC transmembrane type-1 domain; it reads AIYLIVLNAI…MIQNIYIIYN (284 aa). An ABC transporter domain is found at 352–592; it reads VKVINLSYVY…CQYYQELYYS (241 aa). 386 to 393 contributes to the ATP binding site; that stretch reads GKNGSGKS.

The protein belongs to the ABC transporter superfamily. Nisin exporter (TC 3.A.1.111.3) family.

It localises to the cell membrane. Probably implicated in the export process of the lantibiotic nisin. The chain is Nisin transport ATP-binding protein NisT (nisT) from Lactococcus lactis subsp. lactis (Streptococcus lactis).